A 583-amino-acid polypeptide reads, in one-letter code: Pentatricopeptide repeat-containing protein At3g59040 (583 aa).

10 PPR repeats span residues 138-172, 173-207, 208-242, 246-280, 281-312, 313-347, 348-382, 383-417, 418-452, and 453-487; these read SEID…GSTP, NVIS…GPEP, SAIT…KKSP, DQKM…GVPQ, STVT…DIQP, DVVS…GVRP, THKA…RIFP, DLWS…GFEP, NIVT…GIKA, and NQTI…GVPP. A disordered region spans residues 525–583; the sequence is VYGSDDDEEGVEDISSESSDDEDEGDDDDDDARETVLYDKPQEGSLGYGSLQTEELVGL. Positions 528–556 are enriched in acidic residues; sequence SDDDEEGVEDISSESSDDEDEGDDDDDDA. Positions 557–566 are enriched in basic and acidic residues; the sequence is RETVLYDKPQ.

This sequence belongs to the PPR family. P subfamily.

The protein is Pentatricopeptide repeat-containing protein At3g59040 of Arabidopsis thaliana (Mouse-ear cress).